A 573-amino-acid polypeptide reads, in one-letter code: 2-succinyl-5-enolpyruvyl-6-hydroxy-3-cyclohexene-1-carboxylate synthase (573 aa).

The protein belongs to the TPP enzyme family. MenD subfamily. In terms of assembly, homodimer. Mg(2+) is required as a cofactor. Mn(2+) serves as cofactor. The cofactor is thiamine diphosphate.

The enzyme catalyses isochorismate + 2-oxoglutarate + H(+) = 5-enolpyruvoyl-6-hydroxy-2-succinyl-cyclohex-3-ene-1-carboxylate + CO2. The protein operates within quinol/quinone metabolism; 1,4-dihydroxy-2-naphthoate biosynthesis; 1,4-dihydroxy-2-naphthoate from chorismate: step 2/7. It participates in quinol/quinone metabolism; menaquinone biosynthesis. Functionally, catalyzes the thiamine diphosphate-dependent decarboxylation of 2-oxoglutarate and the subsequent addition of the resulting succinic semialdehyde-thiamine pyrophosphate anion to isochorismate to yield 2-succinyl-5-enolpyruvyl-6-hydroxy-3-cyclohexene-1-carboxylate (SEPHCHC). The protein is 2-succinyl-5-enolpyruvyl-6-hydroxy-3-cyclohexene-1-carboxylate synthase of Shewanella baltica (strain OS195).